We begin with the raw amino-acid sequence, 435 residues long: Nucleoredoxin (435 aa).

An N-acetylserine modification is found at Ser2. Residues 167-321 (PKPFREVIAG…VLELSDSNAV (155 aa)) enclose the Thioredoxin domain.

Belongs to the nucleoredoxin family. As to quaternary structure, associates with the phosphatase 2A holoenzyme. Interacts with PPP2CA; the interaction is direct. Interacts with DVL1 (via PDZ domain); the interaction is direct and regulated by oxidative stress.

It localises to the cytoplasm. Its subcellular location is the cytosol. The protein localises to the nucleus. The enzyme catalyses [protein]-dithiol + NAD(+) = [protein]-disulfide + NADH + H(+). The catalysed reaction is [protein]-dithiol + NADP(+) = [protein]-disulfide + NADPH + H(+). In terms of biological role, functions as a redox-dependent negative regulator of the Wnt signaling pathway, possibly by preventing ubiquitination of DVL3 by the BCR(KLHL12) complex. May also function as a transcriptional regulator act as a regulator of protein phosphatase 2A (PP2A). The protein is Nucleoredoxin (NXN) of Bos taurus (Bovine).